The following is a 363-amino-acid chain: Phosphoribosylformylglycinamidine cyclo-ligase (363 aa).

It belongs to the AIR synthase family.

Its subcellular location is the cytoplasm. It carries out the reaction 2-formamido-N(1)-(5-O-phospho-beta-D-ribosyl)acetamidine + ATP = 5-amino-1-(5-phospho-beta-D-ribosyl)imidazole + ADP + phosphate + H(+). It functions in the pathway purine metabolism; IMP biosynthesis via de novo pathway; 5-amino-1-(5-phospho-D-ribosyl)imidazole from N(2)-formyl-N(1)-(5-phospho-D-ribosyl)glycinamide: step 2/2. The chain is Phosphoribosylformylglycinamidine cyclo-ligase from Parvibaculum lavamentivorans (strain DS-1 / DSM 13023 / NCIMB 13966).